The chain runs to 247 residues: 1-(5-phosphoribosyl)-5-[(5-phosphoribosylamino)methylideneamino] imidazole-4-carboxamide isomerase (247 aa).

Asp8 (proton acceptor) is an active-site residue. Residue Asp131 is the Proton donor of the active site.

Belongs to the HisA/HisF family.

It localises to the cytoplasm. It carries out the reaction 1-(5-phospho-beta-D-ribosyl)-5-[(5-phospho-beta-D-ribosylamino)methylideneamino]imidazole-4-carboxamide = 5-[(5-phospho-1-deoxy-D-ribulos-1-ylimino)methylamino]-1-(5-phospho-beta-D-ribosyl)imidazole-4-carboxamide. It participates in amino-acid biosynthesis; L-histidine biosynthesis; L-histidine from 5-phospho-alpha-D-ribose 1-diphosphate: step 4/9. This Acidovorax sp. (strain JS42) protein is 1-(5-phosphoribosyl)-5-[(5-phosphoribosylamino)methylideneamino] imidazole-4-carboxamide isomerase.